A 120-amino-acid chain; its full sequence is Sirohydrochlorin cobaltochelatase (120 aa).

The active-site Proton acceptor is the histidine 9. A Co(2+)-binding site is contributed by histidine 9. Residues glutamine 43 and 68–73 (FAAGTH) each bind substrate. Histidine 73 is a binding site for Co(2+).

It belongs to the CbiX family. CbiXS subfamily. Homotetramer; dimer of dimers.

The catalysed reaction is Co-sirohydrochlorin + 2 H(+) = sirohydrochlorin + Co(2+). Its pathway is cofactor biosynthesis; adenosylcobalamin biosynthesis; cob(II)yrinate a,c-diamide from sirohydrochlorin (anaerobic route): step 1/10. Functionally, catalyzes the insertion of Co(2+) into sirohydrochlorin as part of the anaerobic pathway to cobalamin biosynthesis. This chain is Sirohydrochlorin cobaltochelatase, found in Sulfurisphaera tokodaii (strain DSM 16993 / JCM 10545 / NBRC 100140 / 7) (Sulfolobus tokodaii).